A 234-amino-acid chain; its full sequence is MAKKVFKRLEKLFSKIQNDKAYGVEQGVEVVKSLASAKFDETVEVALRLGVDPRHADQMVRGAVVLPHGTGKKVRVAVFAKDIKQDEAKNAGADVVGGDDLAEEIKNGRIDFDMVIATPDMMAVVGKVGRILGPKGLMPNPKTGTVTMDIAKAVSNAKSGQVNFRVDKKGNVHAPIGKASFPEEKIKENMLELVKTINRLKPSSAKGKYIRNAALSLTMSPSVSLDAQELMDIK.

It belongs to the universal ribosomal protein uL1 family. Part of the 50S ribosomal subunit.

In terms of biological role, binds directly to 23S rRNA. The L1 stalk is quite mobile in the ribosome, and is involved in E site tRNA release. Its function is as follows. Protein L1 is also a translational repressor protein, it controls the translation of the L11 operon by binding to its mRNA. Peptides originating from the N-terminal end of L1 have antibacterial activity against bacteria such as E.coli and B.megaterium and modest antifungal activities. Has no effect on H.pylori itself. Peptides are not hemolytic against mammalian cells. These peptides may be released in the stomach during altruistic lysis to kill other fast growing bacteria. The protein is Large ribosomal subunit protein uL1 of Helicobacter pylori (strain ATCC 700392 / 26695) (Campylobacter pylori).